Consider the following 640-residue polypeptide: Chaperone protein DnaK (640 aa).

Thr-196 carries the post-translational modification Phosphothreonine; by autocatalysis. Disordered stretches follow at residues 487-526 (GKEQ…KEEI) and 593-640 (SHLY…GNDK). The span at 501-526 (TDAEISKMKEDAKEHAAEDQKRKEEI) shows a compositional bias: basic and acidic residues. A compositionally biased stretch (polar residues) spans 595 to 613 (LYQSQGPESSQPETAAQSD). Positions 630 to 640 (AEYEVIDGNDK) are enriched in acidic residues.

The protein belongs to the heat shock protein 70 family.

Its function is as follows. Acts as a chaperone. In Pelodictyon phaeoclathratiforme (strain DSM 5477 / BU-1), this protein is Chaperone protein DnaK.